Reading from the N-terminus, the 365-residue chain is Chorismate synthase (365 aa).

A compositionally biased stretch (basic and acidic residues) spans 41-51 (IQKELDRRRPG). Residues 41–62 (IQKELDRRRPGQSEVSTPRSEA) form a disordered region. Arginine 48 provides a ligand contact to NADP(+). FMN-binding positions include 125–127 (RSS), glycine 285, 300–304 (KPTPS), and arginine 327.

It belongs to the chorismate synthase family. Requires FMNH2 as cofactor.

It catalyses the reaction 5-O-(1-carboxyvinyl)-3-phosphoshikimate = chorismate + phosphate. Its pathway is metabolic intermediate biosynthesis; chorismate biosynthesis; chorismate from D-erythrose 4-phosphate and phosphoenolpyruvate: step 7/7. In terms of biological role, catalyzes the anti-1,4-elimination of the C-3 phosphate and the C-6 proR hydrogen from 5-enolpyruvylshikimate-3-phosphate (EPSP) to yield chorismate, which is the branch point compound that serves as the starting substrate for the three terminal pathways of aromatic amino acid biosynthesis. This reaction introduces a second double bond into the aromatic ring system. The sequence is that of Chorismate synthase from Methanosarcina acetivorans (strain ATCC 35395 / DSM 2834 / JCM 12185 / C2A).